Here is a 91-residue protein sequence, read N- to C-terminus: Potassium channel toxin MeuTXK-beta-2 (91 aa).

Residues 1–19 (MQRNLVVLLFLGMVALSSC) form the signal peptide. The 38-residue stretch at 54 to 91 (QFGCSAYQGYCDDHCQDIEKKEGFCHGFKCKCGIPMGF) folds into the BetaSPN-type CS-alpha/beta domain. Cystine bridges form between cysteine 57-cysteine 78, cysteine 64-cysteine 83, and cysteine 68-cysteine 85.

It belongs to the long chain scorpion toxin family. Class 1 subfamily. Expressed by the venom gland.

It localises to the secreted. Its function is as follows. Has a low affinity binding to potassium channels of rat brain synaptosomes. Displays weak antibacterial activity against Stenotrophomonas sp. Strongly inhibits the development of the Plasmodium berghei ookinetes. Displays slight hemolytic effect on mouse erythrocytes. Induces cytolysis on Xenopus oocytes at high concentrations. Is not toxic towards mice and towards the insect Tenebrio molitor. The chain is Potassium channel toxin MeuTXK-beta-2 from Mesobuthus eupeus (Lesser Asian scorpion).